Consider the following 57-residue polypeptide: Andropin (57 aa).

A signal peptide spans M1–A23.

Belongs to the andropin family. In terms of tissue distribution, ejaculatory duct of adult males.

It localises to the secreted. Male-specific peptide with moderate activity against Gram-positive bacteria. The chain is Andropin (Anp) from Drosophila melanogaster (Fruit fly).